Reading from the N-terminus, the 1863-residue chain is Breast cancer type 1 susceptibility protein homolog (1863 aa).

At Met-1 the chain carries N-acetylmethionine. The RING-type zinc finger occupies 24–65; it reads CPICLELIKEPVSTKCDHIFCKFCMLKLLNQKKGPSQCPLCK. A Glycyl lysine isopeptide (Lys-Gly) (interchain with G-Cter in SUMO2) cross-link involves residue Lys-109. Ser-114 carries the phosphoserine modification. The tract at residues 230–267 is disordered; it reads ETDVTNTEHHQPSNNDLNTTEKRATERHPEKYQGSSVS. Over residues 248-260 the composition is skewed to basic and acidic residues; it reads TTEKRATERHPEK. Residue Lys-301 forms a Glycyl lysine isopeptide (Lys-Gly) (interchain with G-Cter in SUMO2) linkage. The tract at residues 306–338 is disordered; the sequence is NKSKQPGLARSQHNRWAGSKETCNDRRTPSTEK. A compositionally biased stretch (basic and acidic residues) spans 327-338; the sequence is TCNDRRTPSTEK. A Glycyl lysine isopeptide (Lys-Gly) (interchain with G-Cter in SUMO2) cross-link involves residue Lys-339. Phosphoserine occurs at positions 395, 398, 423, and 434. Glycyl lysine isopeptide (Lys-Gly) (interchain with G-Cter in SUMO2) cross-links involve residues Lys-443, Lys-459, and Lys-519. Ser-551 is subject to Phosphoserine. Glycyl lysine isopeptide (Lys-Gly) (interchain with G-Cter in SUMO2) cross-links involve residues Lys-583 and Lys-654. Residues 650–739 form a disordered region; it reads IKKKKYNQMP…EKEEKLETVK (90 aa). 3 positions are modified to phosphoserine: Ser-694, Ser-708, and Ser-725. Over residues 705-716 the composition is skewed to polar residues; the sequence is APGSFTNCSNTS. Residues 727–737 show a composition bias toward basic and acidic residues; the sequence is PREEKEEKLET. Residues Lys-734 and Lys-739 each participate in a glycyl lysine isopeptide (Lys-Gly) (interchain with G-Cter in SUMO2) cross-link. Phosphoserine is present on residues Ser-753 and Ser-840. The interval 896-915 is disordered; the sequence is SPKVTFEREQKEQNQGKNES. Basic and acidic residues predominate over residues 900–909; the sequence is TFEREQKEQN. Glycyl lysine isopeptide (Lys-Gly) (interchain with G-Cter in SUMO2) cross-links involve residues Lys-918 and Lys-987. A Phosphoserine; by CHEK2 modification is found at Ser-988. Ser-1009 carries the post-translational modification Phosphoserine. Lys-1079 participates in a covalent cross-link: Glycyl lysine isopeptide (Lys-Gly) (interchain with G-Cter in SUMO2). Phosphoserine is present on residues Ser-1143, Ser-1189, Ser-1191, Ser-1211, Ser-1217, Ser-1218, Ser-1280, Ser-1328, Ser-1336, Ser-1342, and Ser-1387. The tract at residues 1181–1216 is disordered; that stretch reads VQRGELSRSPSPFTHTHLAQGYRRGAKKLESSEENL. The tract at residues 1322–1395 is disordered; it reads KQMRHQSESQ…SSQSDILTTQ (74 aa). A compositionally biased stretch (polar residues) spans 1373 to 1395; that stretch reads ESETSVSEDCSGLSSQSDILTTQ. Thr-1394 is subject to Phosphothreonine. Residues 1397-1424 are interaction with PALB2; sequence RDTMQDNLIKLQQEMAELEAVLEQHGSQ. A phosphoserine mark is found at Ser-1423, Ser-1457, Ser-1524, and Ser-1542. A disordered region spans residues 1440 to 1505; sequence EDLQNPEQST…SSPSKCPSLD (66 aa). The span at 1444–1470 shows a compositional bias: polar residues; the sequence is NPEQSTSEKAVLTSQKSSEYPISQNPE. The tract at residues 1565-1642 is disordered; that stretch reads ESGISLFSDD…SREKPELTAS (78 aa). Residues 1610–1624 show a composition bias toward polar residues; sequence SAQSPAAAHTTNTAG. 2 BRCT domains span residues 1642 to 1736 and 1756 to 1855; these read STER…DFEV and QDRK…TYLI.

Heterodimer with BARD1. Part of the BRCA1-associated genome surveillance complex (BASC), which contains BRCA1, MSH2, MSH6, MLH1, ATM, BLM, PMS2 and the MRE11-RAD50-NBN protein (MRN) complex. This association could be a dynamic process changing throughout the cell cycle and within subnuclear domains. Component of the BRCA1-A complex, at least composed of BRCA1, BARD1, UIMC1/RAP80, ABRAXAS1, BRCC3/BRCC36, BABAM2 and BABAM1/NBA1. Interacts (via the BRCT domains) with ABRAXAS1 (phosphorylated form); this is important for recruitment to sites of DNA damage. Can form a heterotetramer with two molecules of ABRAXAS1 (phosphorylated form). Component of the BRCA1-RBBP8 complex. Interacts (via the BRCT domains) with RBBP8 ('Ser-327' phosphorylated form); the interaction ubiquitinates RBBP8, regulates CHEK1 activation, and involves RBBP8 in BRCA1-dependent G2/M checkpoint control on DNA damage. Associates with RNA polymerase II holoenzyme. Interacts with SMC1A, NELFB, DCLRE1C, CLSPN. CHEK1, CHEK2, BAP1, BRCC3, UBXN1 and PCLAF. Interacts (via BRCT domains) with BRIP1 (phosphorylated form). Interacts with FANCD2 (ubiquitinated form). Interacts with H2AX (phosphorylated on 'Ser-140'). Interacts (via the BRCT domains) with ACACA (phosphorylated form); the interaction prevents dephosphorylation of ACACA. Part of a BRCA complex containing BRCA1, BRCA2 and PALB2. Interacts directly with PALB2; the interaction is essential for its function in HRR. Interacts directly with BRCA2; the interaction occurs only in the presence of PALB2 which serves as the bridging protein. Interacts (via the BRCT domains) with LMO4; the interaction represses the transcriptional activity of BRCA1. Interacts (via the BRCT domains) with CCAR2 (via N-terminus); the interaction represses the transcriptional activator activity of BRCA1. Interacts with EXD2. Interacts (via C-terminus) with DHX9; this interaction is direct and links BRCA1 to the RNA polymerase II holoenzyme. Interacts with DNA helicase ZGRF1; the interaction is increased following DNA damage induction. Post-translationally, phosphorylated in response to IR, UV, and various stimuli that cause checkpoint activation, probably by ATM or ATR. Phosphorylation at Ser-988 by CHEK2 regulates mitotic spindle assembly. Phosphorylation by AURKA regulates centrosomal microtubule nucleation. In terms of processing, autoubiquitinated, undergoes 'Lys-6'-linked polyubiquitination. 'Lys-6'-linked polyubiquitination does not promote degradation.

The protein localises to the nucleus. Its subcellular location is the chromosome. It localises to the cytoplasm. It catalyses the reaction S-ubiquitinyl-[E2 ubiquitin-conjugating enzyme]-L-cysteine + [acceptor protein]-L-lysine = [E2 ubiquitin-conjugating enzyme]-L-cysteine + N(6)-ubiquitinyl-[acceptor protein]-L-lysine.. Functionally, E3 ubiquitin-protein ligase that specifically mediates the formation of 'Lys-6'-linked polyubiquitin chains and plays a central role in DNA repair by facilitating cellular responses to DNA damage. It is unclear whether it also mediates the formation of other types of polyubiquitin chains. The BRCA1-BARD1 heterodimer coordinates a diverse range of cellular pathways such as DNA damage repair, ubiquitination and transcriptional regulation to maintain genomic stability. Regulates centrosomal microtubule nucleation. Required for appropriate cell cycle arrests after ionizing irradiation in both the S-phase and the G2 phase of the cell cycle. Required for FANCD2 targeting to sites of DNA damage. Inhibits lipid synthesis by binding to inactive phosphorylated ACACA and preventing its dephosphorylation. Contributes to homologous recombination repair (HRR) via its direct interaction with PALB2, fine-tunes recombinational repair partly through its modulatory role in the PALB2-dependent loading of BRCA2-RAD51 repair machinery at DNA breaks. Component of the BRCA1-RBBP8 complex which regulates CHEK1 activation and controls cell cycle G2/M checkpoints on DNA damage via BRCA1-mediated ubiquitination of RBBP8. Acts as a transcriptional activator. The chain is Breast cancer type 1 susceptibility protein homolog (BRCA1) from Pan troglodytes (Chimpanzee).